Consider the following 92-residue polypeptide: Probable Fe(2+)-trafficking protein (92 aa).

It belongs to the Fe(2+)-trafficking protein family.

Its function is as follows. Could be a mediator in iron transactions between iron acquisition and iron-requiring processes, such as synthesis and/or repair of Fe-S clusters in biosynthetic enzymes. The protein is Probable Fe(2+)-trafficking protein of Shewanella sp. (strain W3-18-1).